The sequence spans 194 residues: Troponin I 4 (194 aa).

Positions 1–27 (MSDVDADEARKMAERERKKEEVRKRLE) are disordered. Over residues 7–27 (DEARKMAERERKKEEVRKRLE) the composition is skewed to basic and acidic residues.

It belongs to the troponin I family. Expression is detected only in pharyngeal muscle cells from embryos to adults.

Troponin I is the inhibitory subunit of troponin, the thin filament regulatory complex which confers calcium-sensitivity to muscle actomyosin ATPase activity. This chain is Troponin I 4 (tni-4), found in Caenorhabditis elegans.